Here is a 297-residue protein sequence, read N- to C-terminus: HTH-type transcriptional regulator ArgP (297 aa).

Positions 4–60 (PDYRTLQALDAVIRERGFERAAQKLCITQSAVSQRIKQLENMFGQPLLVRTVPPRPT) constitute an HTH lysR-type domain. A DNA-binding region (H-T-H motif) is located at residues 21–40 (FERAAQKLCITQSAVSQRIK).

The protein belongs to the LysR transcriptional regulatory family. Homodimer.

Functionally, controls the transcription of genes involved in arginine and lysine metabolism. The polypeptide is HTH-type transcriptional regulator ArgP (Salmonella dublin (strain CT_02021853)).